Reading from the N-terminus, the 388-residue chain is Protein TsgA homolog (388 aa).

Helical transmembrane passes span 11–31, 50–70, 77–97, 101–121, 133–153, 160–180, 206–226, 244–264, 268–288, 298–318, 332–352, and 360–380; these read WISFLSYAFTGALVVVTGMIM, TFLNAGILVSIFINSWLIEII, IFSFILTIIAVIGIVLCNSIF, INMFILGLVSGITMSIGTFII, LLLLTDSFFSMSGMIFPIVTA, IIWYWSYICIGAIYLLIFLLT, VFLLSISALLYILGQLGFISW, SLVSGFWMSYMLGMWFFSFII, NLYRMFIFLTSMSTILMYCFI, YIIISLGFFSSAIYTIIITLA, LILLFGTIGTFLTFIITSPIV, and TLISSNILYGIVFFLSILIYF.

The protein belongs to the major facilitator superfamily. TsgA family.

The protein resides in the cell membrane. The protein is Protein TsgA homolog of Buchnera aphidicola subsp. Acyrthosiphon pisum (strain 5A).